A 278-amino-acid polypeptide reads, in one-letter code: Tryptophan synthase alpha chain (278 aa).

Residues E50 and D61 each act as proton acceptor in the active site.

It belongs to the TrpA family. In terms of assembly, tetramer of two alpha and two beta chains.

The enzyme catalyses (1S,2R)-1-C-(indol-3-yl)glycerol 3-phosphate + L-serine = D-glyceraldehyde 3-phosphate + L-tryptophan + H2O. The protein operates within amino-acid biosynthesis; L-tryptophan biosynthesis; L-tryptophan from chorismate: step 5/5. In terms of biological role, the alpha subunit is responsible for the aldol cleavage of indoleglycerol phosphate to indole and glyceraldehyde 3-phosphate. This Methylobacterium nodulans (strain LMG 21967 / CNCM I-2342 / ORS 2060) protein is Tryptophan synthase alpha chain.